The following is a 691-amino-acid chain: DNA-directed RNA polymerase subunit beta' (691 aa).

4 residues coordinate Zn(2+): Cys-69, Cys-71, Cys-87, and Cys-90. Residues Asp-489, Asp-491, and Asp-493 each contribute to the Mg(2+) site.

The protein belongs to the RNA polymerase beta' chain family. RpoC1 subfamily. In terms of assembly, in plastids the minimal PEP RNA polymerase catalytic core is composed of four subunits: alpha, beta, beta', and beta''. When a (nuclear-encoded) sigma factor is associated with the core the holoenzyme is formed, which can initiate transcription. Mg(2+) serves as cofactor. It depends on Zn(2+) as a cofactor.

The protein resides in the plastid. It localises to the chloroplast. The catalysed reaction is RNA(n) + a ribonucleoside 5'-triphosphate = RNA(n+1) + diphosphate. Functionally, DNA-dependent RNA polymerase catalyzes the transcription of DNA into RNA using the four ribonucleoside triphosphates as substrates. The sequence is that of DNA-directed RNA polymerase subunit beta' from Jasminum nudiflorum (Winter jasmine).